The chain runs to 492 residues: N-succinylglutamate 5-semialdehyde dehydrogenase (492 aa).

Position 220–225 (220–225 (GSASTG)) interacts with NAD(+). Residues Glu243 and Cys277 contribute to the active site.

The protein belongs to the aldehyde dehydrogenase family. AstD subfamily.

It carries out the reaction N-succinyl-L-glutamate 5-semialdehyde + NAD(+) + H2O = N-succinyl-L-glutamate + NADH + 2 H(+). The protein operates within amino-acid degradation; L-arginine degradation via AST pathway; L-glutamate and succinate from L-arginine: step 4/5. In terms of biological role, catalyzes the NAD-dependent reduction of succinylglutamate semialdehyde into succinylglutamate. The chain is N-succinylglutamate 5-semialdehyde dehydrogenase from Salmonella typhimurium (strain LT2 / SGSC1412 / ATCC 700720).